We begin with the raw amino-acid sequence, 727 residues long: Alpha-1,3-galactosidase A (727 aa).

Positions 220–241 (ATNRTWRTSNPVFPERHEDHRP) are disordered. Over residues 221–230 (TNRTWRTSNP) the composition is skewed to polar residues. PbH1 repeat units follow at residues 336 to 358 (KGTV…NIHG), 461 to 483 (TPTV…LVTT), 484 to 506 (RRPV…YISS), 517 to 538 (VRNV…IFFD), 551 to 572 (HRNV…LSGR), and 574 to 603 (VGGL…RVGD).

This sequence belongs to the glycosyl hydrolase 110 family. A subfamily.

It carries out the reaction Hydrolysis of terminal, non-reducing branched (1-&gt;3)-alpha-D-galactosidic residues, producing free D-galactose.. The catalysed reaction is Hydrolysis of terminal, non-reducing alpha-D-galactose residues in alpha-D-galactosides, including galactose oligosaccharides, galactomannans and galactolipids.. Functionally, alpha-galactosidase that specifically removes branched alpha-1,3-linked galactose residues present in blood group B antigens. Has no activity toward linear alpha-1,3-linked galactose residues. The sequence is that of Alpha-1,3-galactosidase A (glaA) from Peterkaempfera griseoplana (Streptacidiphilus griseoplanus).